A 298-amino-acid chain; its full sequence is Zinc transport system membrane protein TroC (298 aa).

Transmembrane regions (helical) follow at residues 16–36 (VVLGTLFLGLGSGLVGSFAVL), 41–61 (LFGDAVSHATLPGIVIAFLLT), 68–88 (ILLLGAALSGLVGTVVMLMVM), 97–117 (GAQGIVLGVFLGFGFLLLTHV), 144–164 (VLLIIAMEVVIGLLVLLFWKE), 187–207 (FMLTALIVVAVVVGVQAVGVI), 229–249 (VLCALAALFGGVSGVSGSVVS), and 255–275 (LSTGPVIVLVLTGIALVSIML).

This sequence belongs to the ABC-3 integral membrane protein family.

It is found in the cell membrane. Its function is as follows. Part of an ATP-driven transport system TroABCD for zinc. This Treponema pallidum (strain Nichols) protein is Zinc transport system membrane protein TroC (troC).